The primary structure comprises 811 residues: Actin filament-associated protein 1-like 2 (811 aa).

2 disordered regions span residues Lys-67–Lys-110 and Glu-132–Gln-168. The region spanning Asp-181–Gly-277 is the PH 1 domain. The interval Gln-294–Ile-326 is disordered. The span at Pro-299 to Gly-309 shows a compositional bias: basic and acidic residues. The PH 2 domain maps to Ala-359 to Gly-453. 2 disordered regions span residues Arg-500 to Glu-532 and Leu-558 to Val-631. Composition is skewed to basic and acidic residues over residues Asp-521–Glu-532, Val-566–Arg-577, and Arg-622–Val-631. The stretch at Leu-642–Gly-737 forms a coiled coil.

In terms of assembly, interacts with src.

It is found in the cytoplasm. Its function is as follows. May play a role in a signaling cascade by enhancing the kinase activity of src. Contributes to src-regulated transcription activation. The protein is Actin filament-associated protein 1-like 2 (afap1l2) of Xenopus laevis (African clawed frog).